Here is a 141-residue protein sequence, read N- to C-terminus: MAKQVEKLVKLQIPAGKATPAPPVGPALGQAGVNIMGFTKEFNARTADQAGMIIPVVISVYDDKSFTFITKTPPAAVLLKKAAGVQKGSGEPNKTKVASVTKAQIKEIAELKMPDLNASSVETAMSMIEGTAKSMGFTVTD.

The protein belongs to the universal ribosomal protein uL11 family. Part of the ribosomal stalk of the 50S ribosomal subunit. Interacts with L10 and the large rRNA to form the base of the stalk. L10 forms an elongated spine to which L12 dimers bind in a sequential fashion forming a multimeric L10(L12)X complex. Post-translationally, one or more lysine residues are methylated.

Forms part of the ribosomal stalk which helps the ribosome interact with GTP-bound translation factors. The polypeptide is Large ribosomal subunit protein uL11 (Lactococcus lactis subsp. lactis (strain IL1403) (Streptococcus lactis)).